Consider the following 362-residue polypeptide: tRNA-specific 2-thiouridylase MnmA 1 (362 aa).

ATP is bound by residues 12–19 (GMSGGVDS) and Met-38. The Nucleophile role is filled by Cys-104. A disulfide bond links Cys-104 and Cys-200. An ATP-binding site is contributed by Gly-128. Residues 150 to 152 (KDQ) are interaction with tRNA. The active-site Cysteine persulfide intermediate is Cys-200. Residues 306-307 (RY) form an interaction with tRNA region.

Belongs to the MnmA/TRMU family.

The protein localises to the cytoplasm. The catalysed reaction is S-sulfanyl-L-cysteinyl-[protein] + uridine(34) in tRNA + AH2 + ATP = 2-thiouridine(34) in tRNA + L-cysteinyl-[protein] + A + AMP + diphosphate + H(+). In terms of biological role, catalyzes the 2-thiolation of uridine at the wobble position (U34) of tRNA, leading to the formation of s(2)U34. This Clostridium tetani (strain Massachusetts / E88) protein is tRNA-specific 2-thiouridylase MnmA 1.